The sequence spans 516 residues: Gastrula zinc finger protein XlCGF53.1 (516 aa).

Disordered regions lie at residues M1–E33 and G200–P220. Over residues G200–D218 the composition is skewed to polar residues. 7 C2H2-type zinc fingers span residues Y312 to H334, F354 to H376, Y382 to H404, F410 to H432, Y438 to H460, F466 to H488, and F494 to H516.

Belongs to the krueppel C2H2-type zinc-finger protein family.

It localises to the nucleus. May be involved in transcriptional regulation. In Xenopus laevis (African clawed frog), this protein is Gastrula zinc finger protein XlCGF53.1.